The chain runs to 270 residues: Bis(5'-nucleosyl)-tetraphosphatase, symmetrical (270 aa).

The protein belongs to the Ap4A hydrolase family.

It carries out the reaction P(1),P(4)-bis(5'-adenosyl) tetraphosphate + H2O = 2 ADP + 2 H(+). Functionally, hydrolyzes diadenosine 5',5'''-P1,P4-tetraphosphate to yield ADP. This Actinobacillus pleuropneumoniae serotype 3 (strain JL03) protein is Bis(5'-nucleosyl)-tetraphosphatase, symmetrical.